A 331-amino-acid chain; its full sequence is tRNA U34 carboxymethyltransferase (331 aa).

Carboxy-S-adenosyl-L-methionine-binding positions include K91, W105, K110, G130, 152 to 154 (DPS), 181 to 182 (IE), M196, Y200, and R315.

Belongs to the class I-like SAM-binding methyltransferase superfamily. CmoB family. Homotetramer.

It catalyses the reaction carboxy-S-adenosyl-L-methionine + 5-hydroxyuridine(34) in tRNA = 5-carboxymethoxyuridine(34) in tRNA + S-adenosyl-L-homocysteine + H(+). In terms of biological role, catalyzes carboxymethyl transfer from carboxy-S-adenosyl-L-methionine (Cx-SAM) to 5-hydroxyuridine (ho5U) to form 5-carboxymethoxyuridine (cmo5U) at position 34 in tRNAs. The sequence is that of tRNA U34 carboxymethyltransferase from Shewanella baltica (strain OS155 / ATCC BAA-1091).